The primary structure comprises 172 residues: Photosystem I assembly protein Ycf3 (172 aa).

TPR repeat units lie at residues 35 to 70 (AFTYYRDGAIMSAQSEGNYAEALQNYYEATRSEIDP), 74 to 107 (SYILYNIGLIHTSNGEHTKALEYYFQAIERNPFL), and 122 to 155 (GERAILRGDSEIAEAWFDQAAEYWKQAIGLTPGN).

The protein belongs to the Ycf3 family.

Its subcellular location is the plastid. The protein resides in the chloroplast thylakoid membrane. Functionally, essential for the assembly of the photosystem I (PSI) complex. May act as a chaperone-like factor to guide the assembly of the PSI subunits. This is Photosystem I assembly protein Ycf3 from Dioscorea elephantipes (Elephant's foot yam).